Reading from the N-terminus, the 1078-residue chain is Nonribosomal peptide synthetase aneB (1078 aa).

The interval 20–417 (FQQNVLDRPD…HGRKDTQVKI (398 aa)) is adenylation. The Carrier domain occupies 559–635 (MPTTPLERQM…TLCQHVSVRP (77 aa)). Residue serine 596 is modified to O-(pantetheine 4'-phosphoryl)serine. The tract at residues 699–1013 (NYTLRLDVKL…HEMGYYGPVT (315 aa)) is condensation.

It belongs to the NRP synthetase family.

The catalysed reaction is holo-[peptidyl-carrier protein] + L-proline + ATP = L-prolyl-[peptidyl-carrier protein] + AMP + diphosphate. The protein operates within secondary metabolite biosynthesis. In terms of biological role, nonribosomal peptide synthetase; part of the gene cluster that mediates the biosynthesis of aculenes, a unique type of norsesquiterpenes that contain a nordaucane skeleton linked to an L-proline moiety and are of mixed biosynthetic origin. The pathway begins with the synthesis of dauca-4,7-diene by the terpene cyclase aneC using farnesyl pyrophosphate (FPP) as substrate. The cytochrome P450 monooxygenase aneF then performs the initial oxidation at C-12 of dauca-4,7-diene to yield asperaculane D. Asperaculane D is substrate of the cytochrome P450 monooxygenase aneD for C-10 hydroxylation to yield asperaculane E. The cytochrome P450 monooxygenase aneG then converts asperaculane E into aculene D via C-2 oxidation. The monomodular nonribosomal peptide synthase aneB adenylates L-proline and the thiohydrolase aneE transfers this activated L-proline derivative to aculenes D and C to produce respectively aculenes B and A. The dioxygenase aneA converts aculene D into aculene C, and aculene B into aculene A by introducing the 5,6-alkene moiety. Asperculanes A, B, C and F, as well as 14-prolyl asperculane C, might be shunt products of the pathway. In Aspergillus aculeatus (strain ATCC 16872 / CBS 172.66 / WB 5094), this protein is Nonribosomal peptide synthetase aneB.